The primary structure comprises 381 residues: Cytochrome b (381 aa).

4 helical membrane passes run 34–54 (FGSL…FLAM), 78–99 (WLIR…YLHI), 114–134 (WNIG…GYVL), and 179–199 (FFAF…IHLL). The heme b site is built by H84 and H98. Positions 183 and 197 each coordinate heme b. H202 serves as a coordination point for a ubiquinone. The next 4 helical transmembrane spans lie at 227 to 247 (YKDL…ALFL), 289 to 309 (LGGV…PMLH), 321 to 341 (MTQF…WIGG), and 348 to 368 (FILV…IIIP).

Belongs to the cytochrome b family. As to quaternary structure, the cytochrome bc1 complex contains 3 respiratory subunits (MT-CYB, CYC1 and UQCRFS1), 2 core proteins (UQCRC1 and UQCRC2) and probably 6 low-molecular weight proteins. Requires heme b as cofactor.

The protein localises to the mitochondrion inner membrane. In terms of biological role, component of the ubiquinol-cytochrome c reductase complex (complex III or cytochrome b-c1 complex) that is part of the mitochondrial respiratory chain. The b-c1 complex mediates electron transfer from ubiquinol to cytochrome c. Contributes to the generation of a proton gradient across the mitochondrial membrane that is then used for ATP synthesis. This is Cytochrome b (mt-cyb) from Squalus acanthias (Spiny dogfish).